The primary structure comprises 215 residues: Eukaryotic translation initiation factor 4E (215 aa).

The interval 1 to 27 (MAERDSEPRVNIIRPDDEPEVEEERVP) is disordered. Residue S207 is modified to Phosphoserine; by PKC.

It belongs to the eukaryotic initiation factor 4E family. As to quaternary structure, eIF4F is a multi-subunit complex, the composition of which varies with external and internal environmental conditions. It is composed of at least eIF4A, eIF4E and eIF4G. eIF4E is also known to interact with other partners. In terms of processing, phosphorylation increases the ability of the protein to bind to mRNA caps and to form the eIF4F complex.

Recognizes and binds the 7-methylguanosine-containing mRNA cap during an early step in the initiation of protein synthesis and facilitates ribosome binding by inducing the unwinding of the mRNAs secondary structures. This is Eukaryotic translation initiation factor 4E from Aplysia californica (California sea hare).